A 447-amino-acid chain; its full sequence is Phosphatidylinositol N-acetylglucosaminyltransferase subunit A (447 aa).

Residues 1-387 (MAEPPKLRVL…NRSLLERLMR (387 aa)) are Cytoplasmic-facing. A helical membrane pass occupies residues 388–408 (FLSCGAWAGKLFCMVMILDYL). Over 409 to 447 (LWRLLQLLQPDEDIEEAPDICLCHHRGVEVSEGLRKKIK) the chain is Lumenal.

The protein belongs to the glycosyltransferase group 1 family. Glycosyltransferase 4 subfamily. In terms of tissue distribution, expressed in roots, stems, leaves, flowers and pollen grains.

Its subcellular location is the endoplasmic reticulum membrane. It catalyses the reaction a 1,2-diacyl-sn-glycero-3-phospho-(1D-myo-inositol) + UDP-N-acetyl-alpha-D-glucosamine = a 6-(N-acetyl-alpha-D-glucosaminyl)-1-(1,2-diacyl-sn-glycero-3-phospho)-1D-myo-inositol + UDP + H(+). The protein operates within glycolipid biosynthesis; glycosylphosphatidylinositol-anchor biosynthesis. Its function is as follows. Necessary for the synthesis of N-acetylglucosaminyl-phosphatidylinositol, the very early intermediate in GPI-anchor biosynthesis. Required for pollen germination and pollen tube growth. The polypeptide is Phosphatidylinositol N-acetylglucosaminyltransferase subunit A (Arabidopsis thaliana (Mouse-ear cress)).